A 353-amino-acid chain; its full sequence is Uroporphyrinogen decarboxylase (353 aa).

Substrate is bound by residues 29–33 (RQAGR), Asp-79, Tyr-156, Thr-211, and His-329.

Belongs to the uroporphyrinogen decarboxylase family. In terms of assembly, homodimer.

The protein resides in the cytoplasm. The enzyme catalyses uroporphyrinogen III + 4 H(+) = coproporphyrinogen III + 4 CO2. It functions in the pathway porphyrin-containing compound metabolism; protoporphyrin-IX biosynthesis; coproporphyrinogen-III from 5-aminolevulinate: step 4/4. Its function is as follows. Catalyzes the decarboxylation of four acetate groups of uroporphyrinogen-III to yield coproporphyrinogen-III. This Alcanivorax borkumensis (strain ATCC 700651 / DSM 11573 / NCIMB 13689 / SK2) protein is Uroporphyrinogen decarboxylase.